The chain runs to 417 residues: uncharacterized protein (417 aa).

Residues 10-30 (ALVCFSILSILVLACGCVNTP) traverse the membrane as a helical segment. A disordered region spans residues 84 to 106 (QENHPLQSNQNYEQTNGNFNEEN). The span at 86-106 (NHPLQSNQNYEQTNGNFNEEN) shows a compositional bias: polar residues. The helical transmembrane segment at 148–168 (LYYIKVIDPIVGGLAGIDIYV) threads the bilayer.

It localises to the cell membrane. This is an uncharacterized protein from Methanocaldococcus jannaschii (strain ATCC 43067 / DSM 2661 / JAL-1 / JCM 10045 / NBRC 100440) (Methanococcus jannaschii).